The chain runs to 274 residues: Aliphatic sulfonates import ATP-binding protein SsuB 2 (274 aa).

The region spanning 21-235 (VQLRNVVRQF…DSGQAGFQLI (215 aa)) is the ABC transporter domain. 53-60 (GASGSGKT) contacts ATP.

Belongs to the ABC transporter superfamily. Aliphatic sulfonates importer (TC 3.A.1.17.2) family. In terms of assembly, the complex is composed of two ATP-binding proteins (SsuB), two transmembrane proteins (SsuC) and a solute-binding protein (SsuA).

Its subcellular location is the cell inner membrane. It carries out the reaction ATP + H2O + aliphatic sulfonate-[sulfonate-binding protein]Side 1 = ADP + phosphate + aliphatic sulfonateSide 2 + [sulfonate-binding protein]Side 1.. Its function is as follows. Part of the ABC transporter complex SsuABC involved in aliphatic sulfonates import. Responsible for energy coupling to the transport system. This chain is Aliphatic sulfonates import ATP-binding protein SsuB 2, found in Pseudomonas syringae pv. syringae (strain B728a).